The primary structure comprises 122 residues: LYR motif-containing protein 1 (122 aa).

It belongs to the complex I LYR family.

The protein is LYR motif-containing protein 1 (lyrm1) of Xenopus laevis (African clawed frog).